We begin with the raw amino-acid sequence, 164 residues long: Transcription elongation factor GreA (164 aa).

A coiled-coil region spans residues 15–76; sequence DRLKNELDQL…LQELLNSAKV (62 aa).

It belongs to the GreA/GreB family.

In terms of biological role, necessary for efficient RNA polymerase transcription elongation past template-encoded arresting sites. The arresting sites in DNA have the property of trapping a certain fraction of elongating RNA polymerases that pass through, resulting in locked ternary complexes. Cleavage of the nascent transcript by cleavage factors such as GreA or GreB allows the resumption of elongation from the new 3'terminus. GreA releases sequences of 2 to 3 nucleotides. The sequence is that of Transcription elongation factor GreA from Rhodococcus erythropolis (strain PR4 / NBRC 100887).